We begin with the raw amino-acid sequence, 288 residues long: Phosphopantetheinyl transferase (288 aa).

Residues arginine 60, 99-104 (RTEMGK), and 118-121 (NLSH) contribute to the CoA site. 2 residues coordinate Mg(2+): aspartate 139 and glutamate 196. 196-200 (EAYLK) contacts CoA.

This sequence belongs to the P-Pant transferase superfamily. AcpS family. As to quaternary structure, monomer.

Its subcellular location is the cytoplasm. The protein resides in the cytosol. It carries out the reaction apo-[ACP] + CoA = holo-[ACP] + adenosine 3',5'-bisphosphate + H(+). Its pathway is lipid metabolism; fatty acid biosynthesis. In terms of biological role, phosphopantetheinyl transferase that is essential for attaching phosphopantetheine to ACP domains of the polyunsaturated fatty acid (PUFA) synthase converting the inactive apo-synthase to the active holo-synthase. This is Phosphopantetheinyl transferase from Thraustochytrium sp. (strain ATCC 26185 / S-3).